The primary structure comprises 124 residues: Ribonuclease pancreatic (124 aa).

The segment covering 1–13 (KETSAQKFERQHM) has biased composition (basic and acidic residues). Residues 1–25 (KETSAQKFERQHMDSTGSSSSSPTY) form a disordered region. K7 and R10 together coordinate substrate. H12 acts as the Proton acceptor in catalysis. Intrachain disulfides connect C26–C84, C40–C95, C58–C110, and C65–C72. Residues 41–45 (KPVNT), K66, and R85 each bind substrate. The active-site Proton donor is H119.

It belongs to the pancreatic ribonuclease family. Monomer. Interacts with and forms tight 1:1 complexes with RNH1. Dimerization of two such complexes may occur. Interaction with RNH1 inhibits this protein. Pancreas.

It localises to the secreted. It carries out the reaction an [RNA] containing cytidine + H2O = an [RNA]-3'-cytidine-3'-phosphate + a 5'-hydroxy-ribonucleotide-3'-[RNA].. It catalyses the reaction an [RNA] containing uridine + H2O = an [RNA]-3'-uridine-3'-phosphate + a 5'-hydroxy-ribonucleotide-3'-[RNA].. Its function is as follows. Endonuclease that catalyzes the cleavage of RNA on the 3' side of pyrimidine nucleotides. Acts on single-stranded and double-stranded RNA. The polypeptide is Ribonuclease pancreatic (RNASE1) (Ondatra zibethicus (Muskrat)).